Consider the following 235-residue polypeptide: Heme oxygenase (235 aa).

H19 lines the heme b pocket.

This sequence belongs to the heme oxygenase family.

The protein localises to the plastid. The protein resides in the chloroplast. It carries out the reaction heme b + 3 reduced [NADPH--hemoprotein reductase] + 3 O2 = biliverdin IXalpha + CO + Fe(2+) + 3 oxidized [NADPH--hemoprotein reductase] + 3 H2O + H(+). Its function is as follows. Catalyzes the opening of the heme ring with the release of iron. Key enzyme in the synthesis of the chromophoric part of the photosynthetic antennae. This chain is Heme oxygenase (pbsA), found in Rhodella violacea (Red alga).